The sequence spans 210 residues: Large ribosomal subunit protein uL3 (210 aa).

Residues 131–165 (GPMSHGSKYHRRVGSMGATTDPGRTFKGKKMPGRM) form a disordered region.

This sequence belongs to the universal ribosomal protein uL3 family. As to quaternary structure, part of the 50S ribosomal subunit. Forms a cluster with proteins L14 and L19.

In terms of biological role, one of the primary rRNA binding proteins, it binds directly near the 3'-end of the 23S rRNA, where it nucleates assembly of the 50S subunit. The chain is Large ribosomal subunit protein uL3 from Caldanaerobacter subterraneus subsp. tengcongensis (strain DSM 15242 / JCM 11007 / NBRC 100824 / MB4) (Thermoanaerobacter tengcongensis).